A 340-amino-acid chain; its full sequence is Uroporphyrinogen decarboxylase (340 aa).

Substrate contacts are provided by residues 21–25 (RQAGR), Asp-71, Tyr-147, Ser-202, and His-316.

This sequence belongs to the uroporphyrinogen decarboxylase family. As to quaternary structure, homodimer.

The protein resides in the cytoplasm. It catalyses the reaction uroporphyrinogen III + 4 H(+) = coproporphyrinogen III + 4 CO2. Its pathway is porphyrin-containing compound metabolism; protoporphyrin-IX biosynthesis; coproporphyrinogen-III from 5-aminolevulinate: step 4/4. In terms of biological role, catalyzes the decarboxylation of four acetate groups of uroporphyrinogen-III to yield coproporphyrinogen-III. The sequence is that of Uroporphyrinogen decarboxylase from Nitratiruptor sp. (strain SB155-2).